The sequence spans 128 residues: MGIPLRIDARSTALVAVGGAVGAVLRYTVAQAIAGPLGTLAANAAGSLALGALAYEAAATDSVLSADAHTLLGTGCLSAFTTYSTFAVQTAGLAPRWMAANVATTYALGFAGVLVGRAIAATARGDRR.

4 consecutive transmembrane segments (helical) span residues 13–35 (ALVA…AIAG), 40–59 (LAAN…EAAA), 71–93 (LLGT…TAGL), and 97–119 (WMAA…GRAI).

It belongs to the fluoride channel Fluc/FEX (TC 1.A.43) family.

Its subcellular location is the cell membrane. The catalysed reaction is fluoride(in) = fluoride(out). Its function is as follows. Fluoride-specific ion channel. Important for reducing fluoride concentration in the cell, thus reducing its toxicity. The sequence is that of Fluoride-specific ion channel FluC 2 from Halobacterium salinarum (strain ATCC 700922 / JCM 11081 / NRC-1) (Halobacterium halobium).